Here is an 81-residue protein sequence, read N- to C-terminus: Insulin-like growth factor 1 (81 aa).

A propeptide spanning residues 1 to 4 is cleaved from the precursor; the sequence is FASA. Residues 5 to 33 form a b region; the sequence is GPETLCGAELVDALQFVCGDRGFYFNKPT. Disulfide bonds link cysteine 10–cysteine 52, cysteine 22–cysteine 65, and cysteine 51–cysteine 56. A c region spans residues 34–45; sequence GYGSSSRRAPQT. The a stretch occupies residues 46–66; sequence GIVDECCFRSCDLRRLEMYCA. The d stretch occupies residues 67–74; it reads PLKPAKAA. Positions 75–81 are cleaved as a propeptide — e peptide; the sequence is RSVRAQR.

The protein belongs to the insulin family. Forms a ternary complex with IGFR1 and ITGAV:ITGB3. Forms a ternary complex with IGFR1 and ITGA6:ITGB4.

The protein localises to the secreted. In terms of biological role, the insulin-like growth factors, isolated from plasma, are structurally and functionally related to insulin but have a much higher growth-promoting activity. May be a physiological regulator of [1-14C]-2-deoxy-D-glucose (2DG) transport and glycogen synthesis in osteoblasts. Stimulates glucose transport in bone-derived osteoblastic (PyMS) cells and is effective at much lower concentrations than insulin, not only regarding glycogen and DNA synthesis but also with regard to enhancing glucose uptake. May play a role in synapse maturation. Ca(2+)-dependent exocytosis of IGF1 is required for sensory perception of smell in the olfactory bulb. Acts as a ligand for IGF1R. Binds to the alpha subunit of IGF1R, leading to the activation of the intrinsic tyrosine kinase activity which autophosphorylates tyrosine residues in the beta subunit thus initiating a cascade of down-stream signaling events leading to activation of the PI3K-AKT/PKB and the Ras-MAPK pathways. Binds to integrins ITGAV:ITGB3 and ITGA6:ITGB4. Its binding to integrins and subsequent ternary complex formation with integrins and IGFR1 are essential for IGF1 signaling. Induces the phosphorylation and activation of IGFR1, MAPK3/ERK1, MAPK1/ERK2 and AKT1. As part of the MAPK/ERK signaling pathway, acts as a negative regulator of apoptosis in cardiomyocytes via promotion of STUB1/CHIP-mediated ubiquitination and degradation of ICER-type isoforms of CREM. This Suncus murinus (Asian house shrew) protein is Insulin-like growth factor 1.